We begin with the raw amino-acid sequence, 128 residues long: Keratin-associated protein 2-3 (128 aa).

Residues 5 to 112 are 10 X 5 AA repeats of C-C-[CDPQRWG]-[APRS]-[CIPSTVD]; the sequence is CCGSTLSSLS…SVQSPCCRPP (108 aa).

The protein belongs to the KRTAP type 2 family. As to quaternary structure, interacts with hair keratins.

In the hair cortex, hair keratin intermediate filaments are embedded in an interfilamentous matrix, consisting of hair keratin-associated proteins (KRTAP), which are essential for the formation of a rigid and resistant hair shaft through their extensive disulfide bond cross-linking with abundant cysteine residues of hair keratins. The matrix proteins include the high-sulfur and high-glycine-tyrosine keratins. The polypeptide is Keratin-associated protein 2-3 (KRTAP2-3) (Homo sapiens (Human)).